The chain runs to 115 residues: MNACVLSVLCLLGAVAVLVEGVTVQDGDLSFPLESVKQLKDLREVQEPRLASHKKFAPRLLKPVAPQLCSQSAFPEALRPLCEKPNAEEILQRLEAIAQDPNTCEICAYAACTGC.

Positions 1–21 are cleaved as a signal peptide; the sequence is MNACVLSVLCLLGAVAVLVEG. A propeptide spanning residues 22-100 is cleaved from the precursor; that stretch reads VTVQDGDLSF…LQRLEAIAQD (79 aa). Cystine bridges form between C69–C82, C104–C112, and C107–C115.

Belongs to the guanylin family.

The protein resides in the secreted. Its function is as follows. Endogenous activator of intestinal guanylate cyclase. It stimulates this enzyme through the same receptor binding region as the heat-stable enterotoxins. The chain is Guanylin (GUCA2A) from Notomys alexis (Spinifex hopping mouse).